The sequence spans 270 residues: A-type potassium channel modulatory protein KCNIP2 (270 aa).

The span at 1 to 17 (MRGQGRKESLSDSRDLD) shows a compositional bias: basic and acidic residues. Residues 1 to 33 (MRGQGRKESLSDSRDLDGSYDQLTGHPPGPTKK) are disordered. The residue at position 9 (serine 9) is a Phosphoserine. Residues cysteine 45 and cysteine 46 are each lipidated (S-palmitoyl cysteine). One can recognise an EF-hand 1; degenerate domain in the interval 81-137 (FELSTVCHRPEGLEQLQEQTKFTRKELQVLYRGFKNECPSGIVNEENFKQIYSQFFP). EF-hand domains lie at 140–175 (DSST…ILRG), 176–211 (TIDD…IYDM), and 224–259 (APRE…DENI). Residues aspartate 153, asparagine 155, aspartate 157, serine 159, aspartate 164, aspartate 189, asparagine 191, aspartate 193, cysteine 195, glutamate 200, aspartate 237, asparagine 239, aspartate 241, and glutamate 248 each contribute to the Ca(2+) site. The segment at 257-270 (ENIMRSMQLFDNVI) is interaction with KCND2.

Belongs to the recoverin family. In terms of assembly, component of heteromultimeric potassium channels. Identified in potassium channel complexes containing KCND1, KCND2, KCND3, KCNIP1, KCNIP2, KCNIP3, KCNIP4, DPP6 and DPP10. The KCND2-KCNIP2 channel complex contains four KCND2 and four KCNIP2 subunits. Interacts with KCND2. Probably part of a complex consisting of KCNIP1, KCNIP2 isoform 3 and KCND2. At least isoform 2 and isoform 3 can self-associate to form homodimers and homotetramers. Isoform 3 interacts with KCNIP1 in a calcium-dependent manner. Interacts with KCND3; each KCNIP2 monomer interacts with two adjacent KCND3 subunits, through both the N-terminal inactivation ball of a KCND3 subunit and a C-terminal helix from the adjacent KCND3 subunit, clamping them together; this interaction modulates the channel gating kinetics. Palmitoylated. Palmitoylation enhances association with the plasma membrane. In terms of tissue distribution, expressed in heart ventricle with isoform 1 as most prominent form.

The protein resides in the cell membrane. In terms of biological role, regulatory subunit of Kv4/D (Shal)-type voltage-gated rapidly inactivating A-type potassium channels. Modulates channel density, inactivation kinetics and rate of recovery from inactivation in a calcium-dependent and isoform-specific manner. Involved in KCND2 and KCND3 trafficking to the cell surface. May be required for the expression of I(To) currents in the heart. The sequence is that of A-type potassium channel modulatory protein KCNIP2 from Mustela putorius furo (European domestic ferret).